Consider the following 1224-residue polypeptide: Protein MSN5 (1224 aa).

A disordered region spans residues 1200-1224 (NKENGDMLDDPNIEDGAVGNLFDDN).

As to quaternary structure, interacts with CEX1.

The protein is Protein MSN5 (MSN5) of Saccharomyces cerevisiae (strain ATCC 204508 / S288c) (Baker's yeast).